The primary structure comprises 192 residues: Ribosome maturation factor RimM (192 aa).

The 75-residue stretch at 115-189 folds into the PRC barrel domain; sequence EGEYYLSDLI…RIEITPPKGL (75 aa).

It belongs to the RimM family. As to quaternary structure, binds ribosomal protein uS19.

Its subcellular location is the cytoplasm. An accessory protein needed during the final step in the assembly of 30S ribosomal subunit, possibly for assembly of the head region. Essential for efficient processing of 16S rRNA. May be needed both before and after RbfA during the maturation of 16S rRNA. It has affinity for free ribosomal 30S subunits but not for 70S ribosomes. The sequence is that of Ribosome maturation factor RimM from Acaryochloris marina (strain MBIC 11017).